A 395-amino-acid chain; its full sequence is Elongation factor Tu (395 aa).

A tr-type G domain is found at 6–205 (KPHINVGTIG…NALEKISLPT (200 aa)). A G1 region spans residues 15–22 (GHVDHGKT). 15 to 22 (GHVDHGKT) contacts GTP. Residue Thr22 coordinates Mg(2+). The interval 59-63 (GITIS) is G2. The segment at 80–83 (DCPG) is G3. GTP-binding positions include 80-84 (DCPGH) and 135-138 (NKCD). Residues 135 to 138 (NKCD) form a G4 region. The G5 stretch occupies residues 173–175 (SAV).

Belongs to the TRAFAC class translation factor GTPase superfamily. Classic translation factor GTPase family. EF-Tu/EF-1A subfamily. As to quaternary structure, monomer.

It localises to the cytoplasm. It carries out the reaction GTP + H2O = GDP + phosphate + H(+). GTP hydrolase that promotes the GTP-dependent binding of aminoacyl-tRNA to the A-site of ribosomes during protein biosynthesis. This chain is Elongation factor Tu, found in Ehrlichia chaffeensis (strain ATCC CRL-10679 / Arkansas).